The sequence spans 242 residues: 1-(5-phosphoribosyl)-5-[(5-phosphoribosylamino)methylideneamino] imidazole-4-carboxamide isomerase (242 aa).

Residue aspartate 10 is the Proton acceptor of the active site. The active-site Proton donor is the aspartate 132.

The protein belongs to the HisA/HisF family.

It localises to the cytoplasm. It carries out the reaction 1-(5-phospho-beta-D-ribosyl)-5-[(5-phospho-beta-D-ribosylamino)methylideneamino]imidazole-4-carboxamide = 5-[(5-phospho-1-deoxy-D-ribulos-1-ylimino)methylamino]-1-(5-phospho-beta-D-ribosyl)imidazole-4-carboxamide. Its pathway is amino-acid biosynthesis; L-histidine biosynthesis; L-histidine from 5-phospho-alpha-D-ribose 1-diphosphate: step 4/9. The sequence is that of 1-(5-phosphoribosyl)-5-[(5-phosphoribosylamino)methylideneamino] imidazole-4-carboxamide isomerase from Methanothrix thermoacetophila (strain DSM 6194 / JCM 14653 / NBRC 101360 / PT) (Methanosaeta thermophila).